The chain runs to 184 residues: Large ribosomal subunit protein uL22 (184 aa).

Belongs to the universal ribosomal protein uL22 family. As to quaternary structure, part of the 50S ribosomal subunit.

In terms of biological role, this protein binds specifically to 23S rRNA. It makes multiple contacts with different domains of the 23S rRNA in the assembled 50S subunit and ribosome. Functionally, the globular domain of the protein is located near the polypeptide exit tunnel on the outside of the subunit, while an extended beta-hairpin is found that lines the wall of the exit tunnel in the center of the 70S ribosome. The sequence is that of Large ribosomal subunit protein uL22 from Pyrobaculum calidifontis (strain DSM 21063 / JCM 11548 / VA1).